The sequence spans 904 residues: DNA mismatch repair protein MutS (904 aa).

638–645 (GPNMAGKS) provides a ligand contact to ATP. The segment at 825-869 (KSKADGTRRPASYHEAQPLLPGMPEPPSTASAEPPQTVTPPEPPV) is disordered.

This sequence belongs to the DNA mismatch repair MutS family.

Its function is as follows. This protein is involved in the repair of mismatches in DNA. It is possible that it carries out the mismatch recognition step. This protein has a weak ATPase activity. The polypeptide is DNA mismatch repair protein MutS (Oleidesulfovibrio alaskensis (strain ATCC BAA-1058 / DSM 17464 / G20) (Desulfovibrio alaskensis)).